We begin with the raw amino-acid sequence, 708 residues long: Caprin-1 (708 aa).

Low complexity-rich tracts occupy residues 1–15 (MPSA…SKSS) and 22–37 (GSSG…APAS). Residues 1–48 (MPSATSHSGSGSKSSGPPPPSGSSGNEAGAGAAAPASQHPMTGTGAVQ) are disordered. Pro-2 is modified (N-acetylproline). Position 10 is a phosphoserine (Ser-10). Residues 58 to 92 (VIDKKLRNLEKKKGKLDDYQERMNKGERLNQDQLD) are a coiled coil. Position 113 is a phosphoserine (Ser-113). Residues 123–151 (KTIKKTARREQLMREEAEQKRLKTVLELQ) are a coiled coil. Residue Arg-163 is modified to Omega-N-methylarginine. The segment at 258–287 (EEAASAPTVEDQAAEAEPEPVEEYTEQNEV) is disordered. Residues 269–287 (QAAEAEPEPVEEYTEQNEV) are compositionally biased toward acidic residues. Phosphoserine is present on residues Ser-333 and Ser-341. Residues 358–379 (QDLMAQMQGPYNFIQDSMLDFE) form a G3BP1-binding region. Over residues 415–452 (LAQPNQVSVQPEATQVPLVSSTSEGYTASQPLYQPSHA) the composition is skewed to polar residues. Disordered regions lie at residues 415–459 (LAQP…RPQK), 473–497 (TDQT…GTSK), 521–559 (NAPV…QTEL), and 571–708 (YHGS…QQVN). Low complexity-rich tracts occupy residues 475–489 (QTTA…SQPQ) and 535–559 (QQNQ…QTEL). Positions 572–603 (HGSQDQPHQVTGNHQQPPQQNTGFPRSNQPYY) are enriched in polar residues. Residue Tyr-623 is modified to Phosphotyrosine. An omega-N-methylarginine mark is found at Arg-624 and Arg-631. A phosphotyrosine mark is found at Tyr-634 and Tyr-637. Arg-638 bears the Omega-N-methylarginine mark. Residues 640–656 (SFSTNTPNSGYTQSQFS) show a composition bias toward polar residues. 2 O-linked (GlcNAc) serine glycosylation sites follow: Ser-642 and Ser-648. Tyr-650, Tyr-661, Tyr-664, and Tyr-669 each carry phosphotyrosine. Composition is skewed to low complexity over residues 675 to 685 (RGSGQSGPRGA) and 696 to 708 (NRGM…QQVN). Residue Arg-697 is modified to Asymmetric dimethylarginine; alternate. An Omega-N-methylarginine; alternate modification is found at Arg-697.

It belongs to the caprin family. In terms of assembly, may form homomultimers. Interacts with G3BP1; interaction is direct and promotes stress granule formation. Interacts with G3BP2; interaction is direct and promotes stress granule formation. Interacts with PQBP1. Interacts with DDX3X. Interacts (when phosphorylated by EPHA4) with FMR1; interaction with FMR1 promotes formation of a membraneless compartment. Post-translationally, tyrosine phosphorylation by EPHA4 promotes interaction with FMR1 and liquid-liquid phase separation (LLPS) for the formation of a membraneless compartment that concentrates mRNAs with associated regulatory factors. O-glycosylated (O-GlcNAcylated), in a cell cycle-dependent manner. O-glycosylation by OGT inhibit ability to undergo liquid-liquid phase separation (LLPS).

The protein localises to the cytoplasm. It localises to the cytoplasmic ribonucleoprotein granule. The protein resides in the cytosol. Its subcellular location is the cell projection. It is found in the dendrite. The protein localises to the lamellipodium. Its activity is regulated as follows. Ability to mediate liquid-liquid phase separation is regulated by ATP: moderate concentrations of ATP enhance phase separation, whereas high concentrations of ATP lead to inhibition of phase separation. Functionally, mRNA-binding protein that acts as a regulator of mRNAs transport, translation and/or stability, and which is involved in neurogenesis, synaptic plasticity in neurons and cell proliferation and migration in multiple cell types. Plays an essential role in cytoplasmic stress granule formation. Acts as an mRNA regulator by mediating formation of some phase-separated membraneless compartment: undergoes liquid-liquid phase separation upon binding to target mRNAs, leading to assemble mRNAs into cytoplasmic ribonucleoprotein granules that concentrate mRNAs with associated regulatory factors. Undergoes liquid-liquid phase separation following phosphorylation and interaction with FMR1, promoting formation of cytoplasmic ribonucleoprotein granules that concentrate mRNAs with factors that inhibit translation and mediate deadenylation of target mRNAs. In these cytoplasmic ribonucleoprotein granules, CAPRIN1 mediates recruitment of CNOT7 deadenylase, leading to mRNA deadenylation and degradation. Binds directly and selectively to MYC and CCND2 mRNAs. In neuronal cells, directly binds to several mRNAs associated with RNA granules, including BDNF, CAMK2A, CREB1, MAP2, NTRK2 mRNAs, as well as to GRIN1 and KPNB1 mRNAs, but not to rRNAs. The chain is Caprin-1 (CAPRIN1) from Bos taurus (Bovine).